The following is a 536-amino-acid chain: CTP synthase (536 aa).

The tract at residues 1-268 (MKSKFIFITG…GKVLCKLFNI (268 aa)) is amidoligase domain. Serine 14 is a CTP binding site. Serine 14 contributes to the UTP binding site. 15 to 20 (SLGKGL) provides a ligand contact to ATP. Tyrosine 55 is a binding site for L-glutamine. Residue aspartate 72 participates in ATP binding. Residues aspartate 72 and glutamate 142 each contribute to the Mg(2+) site. CTP is bound by residues 149–151 (DIE), 189–194 (KTKPMQ), and lysine 225. UTP contacts are provided by residues 189 to 194 (KTKPMQ) and lysine 225. The Glutamine amidotransferase type-1 domain maps to 293–535 (TIALVGKYVE…IKAAVDNKIN (243 aa)). Glycine 356 contacts L-glutamine. The active-site Nucleophile; for glutamine hydrolysis is the cysteine 383. Residues 384–387 (LGMQ), glutamate 407, and arginine 463 each bind L-glutamine. Catalysis depends on residues histidine 508 and glutamate 510.

It belongs to the CTP synthase family. In terms of assembly, homotetramer.

The catalysed reaction is UTP + L-glutamine + ATP + H2O = CTP + L-glutamate + ADP + phosphate + 2 H(+). The enzyme catalyses L-glutamine + H2O = L-glutamate + NH4(+). It catalyses the reaction UTP + NH4(+) + ATP = CTP + ADP + phosphate + 2 H(+). It functions in the pathway pyrimidine metabolism; CTP biosynthesis via de novo pathway; CTP from UDP: step 2/2. Allosterically activated by GTP, when glutamine is the substrate; GTP has no effect on the reaction when ammonia is the substrate. The allosteric effector GTP functions by stabilizing the protein conformation that binds the tetrahedral intermediate(s) formed during glutamine hydrolysis. Inhibited by the product CTP, via allosteric rather than competitive inhibition. Functionally, catalyzes the ATP-dependent amination of UTP to CTP with either L-glutamine or ammonia as the source of nitrogen. Regulates intracellular CTP levels through interactions with the four ribonucleotide triphosphates. In Treponema denticola (strain ATCC 35405 / DSM 14222 / CIP 103919 / JCM 8153 / KCTC 15104), this protein is CTP synthase.